Here is a 560-residue protein sequence, read N- to C-terminus: Formate--tetrahydrofolate ligase (560 aa).

Thr-69–Ser-76 lines the ATP pocket.

The protein belongs to the formate--tetrahydrofolate ligase family.

The catalysed reaction is (6S)-5,6,7,8-tetrahydrofolate + formate + ATP = (6R)-10-formyltetrahydrofolate + ADP + phosphate. It functions in the pathway one-carbon metabolism; tetrahydrofolate interconversion. In Listeria monocytogenes serovar 1/2a (strain ATCC BAA-679 / EGD-e), this protein is Formate--tetrahydrofolate ligase.